A 557-amino-acid chain; its full sequence is 2-isopropylmalate synthase (557 aa).

Positions 31–304 (PTWCSVDLRD…DPGLNFASML (274 aa)) constitute a Pyruvate carboxyltransferase domain. Asp-40, His-243, His-245, and Asn-279 together coordinate Mg(2+). Positions 439–557 (IENPIKFLNF…NTMIKDSAAV (119 aa)) are regulatory domain.

Belongs to the alpha-IPM synthase/homocitrate synthase family. LeuA type 2 subfamily. In terms of assembly, homodimer. The cofactor is Mg(2+).

It is found in the cytoplasm. The catalysed reaction is 3-methyl-2-oxobutanoate + acetyl-CoA + H2O = (2S)-2-isopropylmalate + CoA + H(+). Its pathway is amino-acid biosynthesis; L-leucine biosynthesis; L-leucine from 3-methyl-2-oxobutanoate: step 1/4. Catalyzes the condensation of the acetyl group of acetyl-CoA with 3-methyl-2-oxobutanoate (2-ketoisovalerate) to form 3-carboxy-3-hydroxy-4-methylpentanoate (2-isopropylmalate). The protein is 2-isopropylmalate synthase of Desulfitobacterium hafniense (strain Y51).